Reading from the N-terminus, the 282-residue chain is Autophagy protein 5 (282 aa).

Lysine 144 is covalently cross-linked (Glycyl lysine isopeptide (Lys-Gly) (interchain with G-Cter in ATG12)).

Belongs to the ATG5 family. As to quaternary structure, conjugated with ATG12. In terms of processing, conjugated to ATG12; which is essential for autophagy.

Its subcellular location is the preautophagosomal structure membrane. Functionally, involved in cytoplasm to vacuole transport (Cvt) and autophagic vesicle formation. Autophagy is essential for maintenance of amino acid levels and protein synthesis under nitrogen starvation. Required for selective autophagic degradation of the nucleus (nucleophagy). Also required for mitophagy, which eliminates defective or superfluous mitochondria in order to fulfill cellular energy requirements and prevent excess ROS production. Conjugation with ATG12, through a ubiquitin-like conjugating system involving ATG7 as an E1-like activating enzyme and ATG10 as an E2-like conjugating enzyme, is essential for its function. The ATG12-ATG5 conjugate acts as an E3-like enzyme which is required for lipidation of ATG8 and ATG8 association to the vesicle membranes. The chain is Autophagy protein 5 (ATG5) from Scheffersomyces stipitis (strain ATCC 58785 / CBS 6054 / NBRC 10063 / NRRL Y-11545) (Yeast).